The primary structure comprises 218 residues: Carnitine transport permease protein OpuCB (218 aa).

The region spanning 19 to 198 (TWQHLFISLS…ILALVVEFAL (180 aa)) is the ABC transmembrane type-1 domain. Transmembrane regions (helical) follow at residues 23 to 43 (LFIS…TGIL), 48 to 68 (PKVA…PSLA), 79 to 101 (VGTL…RNTF), 149 to 169 (VIAW…DFIF), and 179 to 199 (LILG…FALG).

This sequence belongs to the binding-protein-dependent transport system permease family. As to quaternary structure, the complex is composed of two ATP-binding proteins (OpuCA), two transmembrane proteins (OpuCB and OpuCD) and a solute-binding protein (OpuCC).

The protein resides in the cell membrane. Its function is as follows. Part of the ABC transporter complex OpuCABCD involved in carnitine uptake. Probably responsible for the translocation of the substrate across the membrane. Involved, with BetL and GbuABC, in osmoprotection and cryoprotection of Listeria. The chain is Carnitine transport permease protein OpuCB (opuCB) from Listeria monocytogenes.